A 179-amino-acid chain; its full sequence is ATP synthase subunit delta, chloroplastic (179 aa).

Belongs to the ATPase delta chain family. As to quaternary structure, F-type ATPases have 2 components, F(1) - the catalytic core - and F(0) - the membrane proton channel. F(1) has five subunits: alpha(3), beta(3), gamma(1), delta(1), epsilon(1). CF(0) has four main subunits: a(1), b(1), b'(1) and c(10-14). The alpha and beta chains form an alternating ring which encloses part of the gamma chain. F(1) is attached to F(0) by a central stalk formed by the gamma and epsilon chains, while a peripheral stalk is formed by the delta, b and b' chains.

The protein resides in the plastid. It is found in the chloroplast thylakoid membrane. Functionally, f(1)F(0) ATP synthase produces ATP from ADP in the presence of a proton or sodium gradient. F-type ATPases consist of two structural domains, F(1) containing the extramembraneous catalytic core and F(0) containing the membrane proton channel, linked together by a central stalk and a peripheral stalk. During catalysis, ATP synthesis in the catalytic domain of F(1) is coupled via a rotary mechanism of the central stalk subunits to proton translocation. This protein is part of the stalk that links CF(0) to CF(1). It either transmits conformational changes from CF(0) to CF(1) or is implicated in proton conduction. In Ochrosphaera neapolitana, this protein is ATP synthase subunit delta, chloroplastic.